The following is a 367-amino-acid chain: 2'-5'-oligoadenylate synthase 1A (367 aa).

Residues 14-61 (DKFIEDYLLPDTTFGADVKSAVNVVCDFLKERCFQGAAHPVRVSKVVK) form an interaction with dsRNA region. Ser64 is an ATP binding site. The Mg(2+) site is built by Asp76, Asp78, and Asp149. The tract at residues 201-211 (QRPTKLKSLIR) is interaction with dsRNA. 3 residues coordinate ATP: Arg211, Lys214, and Gln231. The S-geranylgeranyl cysteine moiety is linked to residue Cys364.

The protein belongs to the 2-5A synthase family. In terms of assembly, monomer. Homotetramer. Interacts with OAS1D; the interaction inhibits OAS1A catalytic activity. The cofactor is Mg(2+). In terms of processing, C-terminal prenylated. In terms of tissue distribution, expressed in oocytes and granulosa cells of ovary, in intestine, stomach, spleen and uterus (at protein level). Expressed at high levels in the digestive tract and lymphoid organs. Expressed in ovary and spleen.

It is found in the cytoplasm. Its subcellular location is the mitochondrion. The protein resides in the nucleus. The protein localises to the microsome. It localises to the endoplasmic reticulum. The enzyme catalyses 3 ATP = 5'-triphosphoadenylyl-(2'-&gt;5')-adenylyl-(2'-&gt;5')-adenosine + 2 diphosphate. With respect to regulation, produced as a latent enzyme which is activated by dsRNA generated during the course of viral infection. The dsRNA activator must be at least 15 nucleotides long, and no modification of the 2'-hydroxyl group is tolerated. ssRNA or dsDNA do not act as activators. Interferon-induced, dsRNA-activated antiviral enzyme which plays a critical role in cellular innate antiviral response. In addition, it may also play a role in other cellular processes such as apoptosis, cell growth, differentiation and gene regulation. Synthesizes higher oligomers of 2'-5'-oligoadenylates (2-5A) from ATP which then bind to the inactive monomeric form of ribonuclease L (RNase L) leading to its dimerization and subsequent activation. Activation of RNase L leads to degradation of cellular as well as viral RNA, resulting in the inhibition of protein synthesis, thus terminating viral replication. Can mediate the antiviral effect via the classical RNase L-dependent pathway or an alternative antiviral pathway independent of RNase L. This chain is 2'-5'-oligoadenylate synthase 1A (Oas1a), found in Mus musculus (Mouse).